We begin with the raw amino-acid sequence, 55 residues long: ATP synthase protein 8 (55 aa).

A helical membrane pass occupies residues 8–28 (WWIVNFSLIWASVLIVISLLL). The interval 34-55 (NSAGQSSSSLTLNKTTTNWQWL) is disordered. Residues 39-55 (SSSSLTLNKTTTNWQWL) are compositionally biased toward low complexity.

It belongs to the ATPase protein 8 family. As to quaternary structure, F-type ATPases have 2 components, CF(1) - the catalytic core - and CF(0) - the membrane proton channel.

It is found in the mitochondrion membrane. Mitochondrial membrane ATP synthase (F(1)F(0) ATP synthase or Complex V) produces ATP from ADP in the presence of a proton gradient across the membrane which is generated by electron transport complexes of the respiratory chain. F-type ATPases consist of two structural domains, F(1) - containing the extramembraneous catalytic core and F(0) - containing the membrane proton channel, linked together by a central stalk and a peripheral stalk. During catalysis, ATP synthesis in the catalytic domain of F(1) is coupled via a rotary mechanism of the central stalk subunits to proton translocation. Part of the complex F(0) domain. Minor subunit located with subunit a in the membrane. The sequence is that of ATP synthase protein 8 (MT-ATP8) from Strongylocentrotus purpuratus (Purple sea urchin).